A 426-amino-acid chain; its full sequence is Serine--tRNA ligase (426 aa).

Thr233–Glu235 lines the L-serine pocket. Arg264–Glu266 contributes to the ATP binding site. An L-serine-binding site is contributed by Glu287. Residue Glu351–Ser354 coordinates ATP. Ser386 contributes to the L-serine binding site.

It belongs to the class-II aminoacyl-tRNA synthetase family. Type-1 seryl-tRNA synthetase subfamily. Homodimer. The tRNA molecule binds across the dimer.

Its subcellular location is the cytoplasm. It carries out the reaction tRNA(Ser) + L-serine + ATP = L-seryl-tRNA(Ser) + AMP + diphosphate + H(+). The enzyme catalyses tRNA(Sec) + L-serine + ATP = L-seryl-tRNA(Sec) + AMP + diphosphate + H(+). The protein operates within aminoacyl-tRNA biosynthesis; selenocysteinyl-tRNA(Sec) biosynthesis; L-seryl-tRNA(Sec) from L-serine and tRNA(Sec): step 1/1. Catalyzes the attachment of serine to tRNA(Ser). Is also able to aminoacylate tRNA(Sec) with serine, to form the misacylated tRNA L-seryl-tRNA(Sec), which will be further converted into selenocysteinyl-tRNA(Sec). The chain is Serine--tRNA ligase from Thermosipho africanus (strain TCF52B).